The chain runs to 229 residues: Flagellar L-ring protein (229 aa).

An N-terminal signal peptide occupies residues 1-23; that stretch reads MNPLTRVALAVAAFAALVLALSA. A lipid anchor (N-palmitoyl cysteine) is attached at cysteine 24. A lipid anchor (S-diacylglycerol cysteine) is attached at cysteine 24.

This sequence belongs to the FlgH family. As to quaternary structure, the basal body constitutes a major portion of the flagellar organelle and consists of four rings (L,P,S, and M) mounted on a central rod.

The protein resides in the cell outer membrane. The protein localises to the bacterial flagellum basal body. In terms of biological role, assembles around the rod to form the L-ring and probably protects the motor/basal body from shearing forces during rotation. The polypeptide is Flagellar L-ring protein (Anaeromyxobacter sp. (strain K)).